The primary structure comprises 120 residues: Large ribosomal subunit protein bL12 (120 aa).

Belongs to the bacterial ribosomal protein bL12 family. Homodimer. Part of the ribosomal stalk of the 50S ribosomal subunit. Forms a multimeric L10(L12)X complex, where L10 forms an elongated spine to which 2 to 4 L12 dimers bind in a sequential fashion. Binds GTP-bound translation factors.

Its function is as follows. Forms part of the ribosomal stalk which helps the ribosome interact with GTP-bound translation factors. Is thus essential for accurate translation. The chain is Large ribosomal subunit protein bL12 from Listeria monocytogenes serotype 4b (strain CLIP80459).